A 436-amino-acid polypeptide reads, in one-letter code: Histidinol dehydrogenase (436 aa).

Residues Thr240, Gln262, and His265 each contribute to the substrate site. Zn(2+)-binding residues include Gln262 and His265. Catalysis depends on proton acceptor residues Glu331 and His332. Substrate is bound by residues His332, Asp365, Glu419, and His424. Asp365 is a Zn(2+) binding site. Zn(2+) is bound at residue His424.

This sequence belongs to the histidinol dehydrogenase family. The cofactor is Zn(2+).

The enzyme catalyses L-histidinol + 2 NAD(+) + H2O = L-histidine + 2 NADH + 3 H(+). Its pathway is amino-acid biosynthesis; L-histidine biosynthesis; L-histidine from 5-phospho-alpha-D-ribose 1-diphosphate: step 9/9. In terms of biological role, catalyzes the sequential NAD-dependent oxidations of L-histidinol to L-histidinaldehyde and then to L-histidine. The chain is Histidinol dehydrogenase from Leifsonia xyli subsp. xyli (strain CTCB07).